Here is a 282-residue protein sequence, read N- to C-terminus: Bis(5'-nucleosyl)-tetraphosphatase, symmetrical (282 aa).

The protein belongs to the Ap4A hydrolase family.

The catalysed reaction is P(1),P(4)-bis(5'-adenosyl) tetraphosphate + H2O = 2 ADP + 2 H(+). In terms of biological role, hydrolyzes diadenosine 5',5'''-P1,P4-tetraphosphate to yield ADP. This Salmonella agona (strain SL483) protein is Bis(5'-nucleosyl)-tetraphosphatase, symmetrical.